A 171-amino-acid polypeptide reads, in one-letter code: Serine acetyltransferase (171 aa).

Belongs to the transferase hexapeptide repeat family.

The protein resides in the cytoplasm. The catalysed reaction is L-serine + acetyl-CoA = O-acetyl-L-serine + CoA. The protein operates within amino-acid biosynthesis; L-cysteine biosynthesis; L-cysteine from L-serine: step 1/2. The polypeptide is Serine acetyltransferase (cysE) (Helicobacter pylori (strain J99 / ATCC 700824) (Campylobacter pylori J99)).